The sequence spans 612 residues: UvrABC system protein C (612 aa).

The region spanning 21–99 (KLPGVYQMYD…IKSQKPPFNI (79 aa)) is the GIY-YIG domain. Residues 209 to 244 (EVLQQELQVEMEQASQALDFERAVVVRDQITDLRQV) form the UVR domain.

This sequence belongs to the UvrC family. In terms of assembly, interacts with UvrB in an incision complex.

The protein resides in the cytoplasm. In terms of biological role, the UvrABC repair system catalyzes the recognition and processing of DNA lesions. UvrC both incises the 5' and 3' sides of the lesion. The N-terminal half is responsible for the 3' incision and the C-terminal half is responsible for the 5' incision. This Saccharophagus degradans (strain 2-40 / ATCC 43961 / DSM 17024) protein is UvrABC system protein C.